The chain runs to 150 residues: Endoribonuclease YbeY (150 aa).

Zn(2+) is bound by residues histidine 112, histidine 116, and aspartate 122.

This sequence belongs to the endoribonuclease YbeY family. Zn(2+) serves as cofactor.

The protein resides in the cytoplasm. In terms of biological role, single strand-specific metallo-endoribonuclease involved in late-stage 70S ribosome quality control and in maturation of the 3' terminus of the 16S rRNA. The protein is Endoribonuclease YbeY of Protochlamydia amoebophila (strain UWE25).